We begin with the raw amino-acid sequence, 2339 residues long: DNA-directed RNA polymerase III subunit RPC1 (2339 aa).

Zn(2+)-binding residues include cysteine 88, cysteine 91, cysteine 98, histidine 101, cysteine 128, cysteine 131, and cysteine 175. Aspartate 611, aspartate 613, and aspartate 615 together coordinate Mg(2+). Residues 955 to 967 (PTEFFFHTMSGRE) are bridging helix. Disordered regions lie at residues 1503-1557 (EKRK…NNYY) and 2038-2079 (LKSE…DSDR). Over residues 1509 to 1520 (PKEEKENFDRNN) the composition is skewed to basic and acidic residues. Over residues 1521 to 1557 (YKMITDNNNNDNNNNNNDNNNNDNNNNNNNSNNNNYY) the composition is skewed to low complexity. Basic and acidic residues predominate over residues 2038 to 2047 (LKSEKKKDIN). Residues 2049 to 2059 (DNNNNDDNNNN) are compositionally biased toward low complexity.

It belongs to the RNA polymerase beta' chain family. As to quaternary structure, component of the RNA polymerase III (Pol III) complex consisting of 17 subunits.

The protein localises to the nucleus. The catalysed reaction is RNA(n) + a ribonucleoside 5'-triphosphate = RNA(n+1) + diphosphate. Functionally, DNA-dependent RNA polymerase catalyzes the transcription of DNA into RNA using the four ribonucleoside triphosphates as substrates. Largest and catalytic core component of RNA polymerase III which synthesizes small RNAs, such as 5S rRNA and tRNAs. Forms the polymerase active center together with the second largest subunit. A single-stranded DNA template strand of the promoter is positioned within the central active site cleft of Pol III. A bridging helix emanates from RPC1 and crosses the cleft near the catalytic site and is thought to promote translocation of Pol III by acting as a ratchet that moves the RNA-DNA hybrid through the active site by switching from straight to bent conformations at each step of nucleotide addition. The polypeptide is DNA-directed RNA polymerase III subunit RPC1 (Plasmodium falciparum).